The sequence spans 217 residues: Large ribosomal subunit protein uL1 (217 aa).

It belongs to the universal ribosomal protein uL1 family. Component of the large ribosomal subunit (LSU). Mature ribosomes consist of a small (40S) and a large (60S) subunit. The 40S subunit contains about 32 different proteins and 1 molecule of RNA (18S). The 60S subunit contains 45 different proteins and 3 molecules of RNA (25S, 5.8S and 5S). uL1 forms part of the L1 stalk.

The protein localises to the cytoplasm. In terms of biological role, component of the ribosome, a large ribonucleoprotein complex responsible for the synthesis of proteins in the cell. The small ribosomal subunit (SSU) binds messenger RNAs (mRNAs) and translates the encoded message by selecting cognate aminoacyl-transfer RNA (tRNA) molecules. The large subunit (LSU) contains the ribosomal catalytic site termed the peptidyl transferase center (PTC), which catalyzes the formation of peptide bonds, thereby polymerizing the amino acids delivered by tRNAs into a polypeptide chain. The nascent polypeptides leave the ribosome through a tunnel in the LSU and interact with protein factors that function in enzymatic processing, targeting, and the membrane insertion of nascent chains at the exit of the ribosomal tunnel. uL1 forms part of the L1 stalk, a mobile element that plays a role in evacuating the exit-site tRNA. In Candida albicans (strain SC5314 / ATCC MYA-2876) (Yeast), this protein is Large ribosomal subunit protein uL1 (RPL10A).